Here is an 85-residue protein sequence, read N- to C-terminus: UPF0298 protein SUB0431 (85 aa).

The protein belongs to the UPF0298 family.

The protein localises to the cytoplasm. In Streptococcus uberis (strain ATCC BAA-854 / 0140J), this protein is UPF0298 protein SUB0431.